We begin with the raw amino-acid sequence, 347 residues long: Heme A synthase (347 aa).

A run of 8 helical transmembrane segments spans residues 14-34 (VKIW…IGGI), 96-116 (FHRL…LYFM), 129-149 (FILI…MVKS), 162-182 (LAMH…HFLL), 199-219 (VFYI…LVAG), 260-280 (FIHE…LLVL), 287-307 (MYLL…TFIY), and 311-331 (IILA…SIYL). Histidine 262 serves as a coordination point for heme. Histidine 317 lines the heme pocket.

This sequence belongs to the COX15/CtaA family. Type 2 subfamily. In terms of assembly, interacts with CtaB. It depends on heme b as a cofactor.

The protein localises to the cell membrane. The enzyme catalyses Fe(II)-heme o + 2 A + H2O = Fe(II)-heme a + 2 AH2. The protein operates within porphyrin-containing compound metabolism; heme A biosynthesis; heme A from heme O: step 1/1. Catalyzes the conversion of heme O to heme A by two successive hydroxylations of the methyl group at C8. The first hydroxylation forms heme I, the second hydroxylation results in an unstable dihydroxymethyl group, which spontaneously dehydrates, resulting in the formyl group of heme A. This Ehrlichia ruminantium (strain Welgevonden) protein is Heme A synthase.